We begin with the raw amino-acid sequence, 353 residues long: uncharacterized protein (353 aa).

Positions 40, 70, 100, 103, 106, 114, and 158 each coordinate Zn(2+).

This sequence belongs to the zinc-containing alcohol dehydrogenase family. Zn(2+) is required as a cofactor.

This is an uncharacterized protein from Escherichia coli (strain K12).